The chain runs to 398 residues: DJ-1 protein homolog E (398 aa).

PfpI endopeptidase domains are found at residues 7–199 and 210–393; these read KSAL…ESLG and ASVL…TALG.

It belongs to the peptidase C56 family. As to quaternary structure, homotrimer. In terms of tissue distribution, expressed in roots and cauline leaves.

May be involved in oxidative stress response. The protein is DJ-1 protein homolog E (DJ1E) of Arabidopsis thaliana (Mouse-ear cress).